Here is a 149-residue protein sequence, read N- to C-terminus: UPF0178 protein Mmwyl1_2258 (149 aa).

The protein belongs to the UPF0178 family.

In Marinomonas sp. (strain MWYL1), this protein is UPF0178 protein Mmwyl1_2258.